Consider the following 129-residue polypeptide: M-zodatoxin-Lt8i (129 aa).

The signal sequence occupies residues 1–20 (MKYFVVALALVAAFACIAES). Positions 21–60 (KPAESEHELAEVEEENELADLEDAVWLEHLADLSDLEEAR) are excised as a propeptide.

Belongs to the cationic peptide 06 (cytoinsectotoxin) family. As to expression, expressed by the venom gland.

It is found in the secreted. Insecticidal, cytolytic and antimicrobial peptide. Forms voltage-dependent, ion-permeable channels in membranes. At high concentration causes cell membrane lysis. This Lachesana tarabaevi (Spider) protein is M-zodatoxin-Lt8i (cit 1-6).